A 623-amino-acid chain; its full sequence is Bifunctional dihydrofolate reductase-thymidylate synthase (623 aa).

Positions 9 to 237 constitute a DHFR domain; sequence DIYAICACCK…TTLDFLVYSK (229 aa). 13–14 contributes to the substrate binding site; sequence IC. NADP(+)-binding positions include Ala-15 and 38–44; that span reads GLGNKGT. Substrate is bound at residue Asp-53. 3 repeat units span residues 88–91, 94–97, and 100–103. The interval 88–103 is 3 X 4 AA repeats of G-G-D-N; that stretch reads GGDNTSGGDNTHGGDN. Residues 115-117, 137-139, and Asp-153 contribute to the NADP(+) site; these read RSS and SKT. The substrate site is built by Ile-173, Tyr-179, and Thr-194. NADP(+) is bound at residue 174-181; the sequence is GGAQVYRE. Positions 263–309 are disordered; that stretch reads TAMRRNVAPRTAAPPMGPHSRANGERAPPRARARRTTPRQRKTTSCT. Basic residues predominate over residues 291-304; sequence PRARARRTTPRQRK. The thymidylate synthase stretch occupies residues 337-623; the sequence is QHPEYQYLGI…HDKITMEMAA (287 aa). Residue Arg-360 participates in dUMP binding. Residue Cys-505 is part of the active site. DUMP-binding positions include His-506, 524-528, Asn-536, and 566-568; these read QRSCD and HVY.

It in the N-terminal section; belongs to the dihydrofolate reductase family. In the C-terminal section; belongs to the thymidylate synthase family. Homodimer.

It carries out the reaction (6S)-5,6,7,8-tetrahydrofolate + NADP(+) = 7,8-dihydrofolate + NADPH + H(+). It catalyses the reaction dUMP + (6R)-5,10-methylene-5,6,7,8-tetrahydrofolate = 7,8-dihydrofolate + dTMP. The protein operates within cofactor biosynthesis; tetrahydrofolate biosynthesis; 5,6,7,8-tetrahydrofolate from 7,8-dihydrofolate: step 1/1. In terms of biological role, bifunctional enzyme. Involved in de novo dTMP biosynthesis. Key enzyme in folate metabolism. Catalyzes an essential reaction for de novo glycine and purine synthesis, DNA precursor synthesis, and for the conversion of dUMP to dTMP. The sequence is that of Bifunctional dihydrofolate reductase-thymidylate synthase from Plasmodium vivax.